Consider the following 335-residue polypeptide: MTENVVCTGAVNAVKEVWEKRIKKLNEDLKREKEFQHKLVRIWEERVSLTKLREKVTREDGRVILKIEKEEWKTLPSSLLKLNQLQEWQLHRTGLLKIPEFIGRFQNLIVLDLSRNTISEIPPGIGLLTRLQELILSYNKIKTVPKELSNCASLEKLELAVNRDICDLPQELSNLLKLTHLDLSMNDFTTIPLAVLNMPALEWLDMGSNKLEQLPDTIERMQNLHTLWLQRNEITCLPQTISNMKNLGTLVLSNNKLQDIPVCMEEMANLRFVNFRDNPLKLKVSLPPSEGTDEEEERELFGLQFMHTYIQESRRRADHQVNGSTTLPISINTDG.

A coiled-coil region spans residues 10–47; sequence AVNAVKEVWEKRIKKLNEDLKREKEFQHKLVRIWEERV. 9 LRR repeats span residues 84 to 105, 107 to 128, 130 to 151, 153 to 176, 177 to 197, 200 to 221, 223 to 244, 246 to 267, and 269 to 290; these read QLQE…IGRF, NLIV…IGLL, RLQE…LSNC, SLEK…SNLL, KLTH…AVLN, ALEW…IERM, NLHT…ISNM, NLGT…MEEM, and NLRF…PPSE.

As to quaternary structure, interacts with MYH7 (via C-terminus). As to expression, highly expressed in skeletal muscle and heart. Not detected in other tissues tested.

It localises to the cytoplasm. Its subcellular location is the myofibril. The protein localises to the sarcomere. The protein resides in the m line. Its function is as follows. Component of the sarcomeric M-band which plays a role in myocyte response to biomechanical stress. May regulate expression of other M-band proteins via an SRF-dependent pathway. Important for normal contractile function in heart. This is Leucine-rich repeat-containing protein 39 (LRRC39) from Homo sapiens (Human).